Reading from the N-terminus, the 470-residue chain is UDP-glycosyltransferase 91A1 (470 aa).

Residues Ser-290, 350–352 (VEQ), 367–375 (HPGWGTIIE), and 389–392 (VYDQ) each bind UDP-alpha-D-glucose.

This sequence belongs to the UDP-glycosyltransferase family.

In Arabidopsis thaliana (Mouse-ear cress), this protein is UDP-glycosyltransferase 91A1 (UGT91A1).